The primary structure comprises 100 residues: Urease subunit gamma (100 aa).

It belongs to the urease gamma subunit family. As to quaternary structure, heterotrimer of UreA (gamma), UreB (beta) and UreC (alpha) subunits. Three heterotrimers associate to form the active enzyme.

It is found in the cytoplasm. It catalyses the reaction urea + 2 H2O + H(+) = hydrogencarbonate + 2 NH4(+). Its pathway is nitrogen metabolism; urea degradation; CO(2) and NH(3) from urea (urease route): step 1/1. The polypeptide is Urease subunit gamma (Pseudoalteromonas translucida (strain TAC 125)).